Here is a 282-residue protein sequence, read N- to C-terminus: Elongation factor Ts (282 aa).

The tract at residues 80–83 (TDFV) is involved in Mg(2+) ion dislocation from EF-Tu.

This sequence belongs to the EF-Ts family.

It is found in the cytoplasm. In terms of biological role, associates with the EF-Tu.GDP complex and induces the exchange of GDP to GTP. It remains bound to the aminoacyl-tRNA.EF-Tu.GTP complex up to the GTP hydrolysis stage on the ribosome. The polypeptide is Elongation factor Ts (Aliivibrio salmonicida (strain LFI1238) (Vibrio salmonicida (strain LFI1238))).